We begin with the raw amino-acid sequence, 977 residues long: Leucine--tRNA ligase (977 aa).

A 'HIGH' region motif is present at residues 11-21; the sequence is PYVNGYLHLGH. The segment at 220–318 is insert; it reads VFYVYELYSL…EYYNTKVETQ (99 aa). The 'KMSKS' region signature appears at 699–703; that stretch reads KMSKS. Residue Lys-702 participates in ATP binding.

The protein belongs to the class-I aminoacyl-tRNA synthetase family.

The protein localises to the cytoplasm. It carries out the reaction tRNA(Leu) + L-leucine + ATP = L-leucyl-tRNA(Leu) + AMP + diphosphate. In Nanoarchaeum equitans (strain Kin4-M), this protein is Leucine--tRNA ligase (leuS).